Here is a 128-residue protein sequence, read N- to C-terminus: MAPVKKPAAKGGKKKKQVLKFTLDCTHPVEDGIMDAANFEQFLQERIKVNGKAGNLGGGVVTIERSKSKITVTSEVPFSKRYLKYLTKKYLKKNNLRDWLRVVANSKESYELRYFQINQDEEEEEEED.

Belongs to the eukaryotic ribosomal protein eL22 family. As to quaternary structure, component of the large ribosomal subunit.

It localises to the cytoplasm. Component of the large ribosomal subunit. The ribosome is a large ribonucleoprotein complex responsible for the synthesis of proteins in the cell. The protein is Large ribosomal subunit protein eL22 (RPL22) of Gallus gallus (Chicken).